Consider the following 45-residue polypeptide: Osteocalcin 1 (45 aa).

Positions 1 to 41 (AAGQLSLTQLESLREVCELNLACEHMMDTEGIIAAYTAYYG) constitute a Gla domain. Ca(2+)-binding residues include Glu11, Glu15, Glu18, and Glu24. Residues Glu11, Glu15, and Glu18 each carry the 4-carboxyglutamate modification. The cysteines at positions 17 and 23 are disulfide-linked.

The protein belongs to the osteocalcin/matrix Gla protein family. In terms of processing, gamma-carboxyglutamate residues are formed by vitamin K dependent carboxylation by GGCX. These residues are essential for the binding of calcium.

The protein resides in the secreted. Its function is as follows. The carboxylated form is one of the main organic components of the bone matrix, which constitutes 1-2% of the total bone protein. The carboxylated form binds strongly to apatite and calcium. The polypeptide is Osteocalcin 1 (Diplodus sargus (White seabream)).